A 567-amino-acid polypeptide reads, in one-letter code: Allo-aromadendrene synthase TPS4FN (567 aa).

(2E,6E)-farnesyl diphosphate-binding residues include Arg-282, Asp-319, Asp-323, Arg-462, and Asp-465. Residues Asp-319 and Asp-323 each contribute to the Mg(2+) site. Positions 319–323 (DDIYD) match the DDXXD motif motif. Asp-465 and Glu-473 together coordinate Mg(2+).

The protein belongs to the terpene synthase family. Tpsb subfamily. Requires Mg(2+) as cofactor. Mn(2+) is required as a cofactor.

It carries out the reaction (2E,6E)-farnesyl diphosphate = alpha-humulene + diphosphate. The enzyme catalyses (2E,6E)-farnesyl diphosphate = (+)-valencene + diphosphate. It catalyses the reaction (2E)-geranyl diphosphate = beta-myrcene + diphosphate. The catalysed reaction is (2E,6E)-farnesyl diphosphate = allo-aromadendrene + diphosphate. It carries out the reaction (2E,6E)-farnesyl diphosphate + H2O = palustrol + diphosphate. Its pathway is secondary metabolite biosynthesis; terpenoid biosynthesis. In terms of biological role, involved in sesquiterpene olefins biosynthesis, constituants of cannabinoids and terpenoids-rich resins. Catalyzes mainly the conversion of (2E)-farnesyl diphosphate to allo-aromadendrene, and also produces minor products such as alpha-humulene, valencene and palustrol. Can also use (2E)-geranyl diphosphate as substrate with low efficiency, producing minor amounts of myrcene. The sequence is that of Allo-aromadendrene synthase TPS4FN from Cannabis sativa (Hemp).